The sequence spans 623 residues: Putative chaperone protein ClpB2, chloroplastic (623 aa).

Positions 1 to 123 constitute a Clp R domain; sequence MNDLKFDPNV…KSEVEKLRGE (123 aa). Repeat stretches follow at residues 6-71 and 77-123; these read FDPN…NQSL and RNLG…LRGE. The interval 129 to 375 is i; sequence LKTYGTDLVE…HVKAQLDIQP (247 aa). ATP is bound at residue 172 to 179; it reads GEPGVGKT. Residues 368-462 adopt a coiled-coil conformation; that stretch reads KAQLDIQPEE…LQEAERQHDV (95 aa). 571–578 contributes to the ATP binding site; that stretch reads GPTGVGKT.

This sequence belongs to the ClpA/ClpB family.

This chain is Putative chaperone protein ClpB2, chloroplastic (CLPB2), found in Arabidopsis thaliana (Mouse-ear cress).